The following is a 634-amino-acid chain: Bacteriophytochrome (634 aa).

Residue C13 coordinates biliverdin IXalpha. A PAS 1 domain is found at 13–118 (CAREPIHIPG…YPQQWLVEME (106 aa)). The interval 13–514 (CAREPIHIPG…ELMERKRFQQ (502 aa)) is photosensory core domain. The 155-residue stretch at 151 to 305 (RVAKGLRSLI…VTDAVARTLA (155 aa)) folds into the GAF domain. A phytochrome-specific (PHY) region spans residues 325–508 (TVREKLITDF…SLRVLIELME (184 aa)). The tract at residues 452-480 (WAGNPQLAKLEDIPNSRLSPRKSFDLWQQ) is tongue domain. One can recognise a PAS 2 domain in the interval 515–590 (DFTLLEASLS…ELLQDALRNG (76 aa)). A PAS9, output module, not required to bind biliverdin IX-alpha, required for dimerization region spans residues 515 to 634 (DFTLLEASLS…HWLLQLRDPE (120 aa)).

The protein in the N-terminal section; belongs to the phytochrome family. In terms of assembly, forms head-to-head homodimers. Post-translationally, contains one covalently linked biliverdin IX-alpha chromophore; present in the crystal structure as a mixture of Pr and Meta-R configurations.

Photoreceptor which exists in two forms that are reversibly interconvertible by light: far-red light (733 nm) converts protein to the red-absorbing (Pr) form, while red light (630 nm) partly converts the protein to the far-red-absorbing (Pfr) form. Regulates virulence of X.campestris pv. campestris on its host plants, perhaps by fine-tuning expression to ambient light levels and/or spatial cues. The Pr form may sense light and partially inhibit virulence; in the dark (Pfr form) biofilm and xanathan production rise and bacteria are more virulent. Strains overexpressing this protein have significantly decreased amounts of extracellular beta-1,4-endoglucanase, produce less xanthin and have decreased transcription of genes involved in virulence such as endoglucanases, type 2 secretion systems, xanthan production and flagellar-dependent motility. This is Bacteriophytochrome (bphP) from Xanthomonas campestris pv. campestris (strain 8004).